We begin with the raw amino-acid sequence, 338 residues long: MPIFTAQELAERFNLQLFGDGNLRIHGVATLTQASPEQLSFLANPRYLTQLLNSRAGVIVLHADDVKTASGTVLIAKDPYVTFAKIAALFDIKPAREAGIHPLATVDPSAHVSPTAHVGAFVSIGARSSIGASCIIGTGSIIGDDCTIDDGSELIARVTLISKVRLGKRVRIHPGAVLGGEGFGLAMENGHWIKIPQLGGVVIGDDCEIGANSCIDRGALDDTVLEEDVHIDNLVQIAHNCRIGAHTAIAGCTGIAGSAKIGRYCLLGGHVGVVGHLQICDNVVITGKSVVRNSIHTPGEYSSGTPLTDNRTWRKNAVRFKQLDMLVRRMMAVSKEKA.

His-239 serves as the catalytic Proton acceptor.

It belongs to the transferase hexapeptide repeat family. LpxD subfamily. In terms of assembly, homotrimer.

The catalysed reaction is a UDP-3-O-[(3R)-3-hydroxyacyl]-alpha-D-glucosamine + a (3R)-hydroxyacyl-[ACP] = a UDP-2-N,3-O-bis[(3R)-3-hydroxyacyl]-alpha-D-glucosamine + holo-[ACP] + H(+). It functions in the pathway bacterial outer membrane biogenesis; LPS lipid A biosynthesis. Functionally, catalyzes the N-acylation of UDP-3-O-acylglucosamine using 3-hydroxyacyl-ACP as the acyl donor. Is involved in the biosynthesis of lipid A, a phosphorylated glycolipid that anchors the lipopolysaccharide to the outer membrane of the cell. This is UDP-3-O-acylglucosamine N-acyltransferase from Xylella fastidiosa (strain 9a5c).